The sequence spans 356 residues: D-alanine--D-alanine ligase (356 aa).

The 206-residue stretch at 134-339 (KQLFAHRGLP…YSDLIKKLIE (206 aa)) folds into the ATP-grasp domain. Residue 167 to 222 (HDKLEYPVFVKPANLGSSVGISKCNNEEELKNGIEEAFQFDRKLVIEQGIEAREIE) participates in ATP binding. 3 residues coordinate Mg(2+): aspartate 293, glutamate 306, and asparagine 308.

Belongs to the D-alanine--D-alanine ligase family. The cofactor is Mg(2+). Mn(2+) serves as cofactor.

It is found in the cytoplasm. It carries out the reaction 2 D-alanine + ATP = D-alanyl-D-alanine + ADP + phosphate + H(+). The protein operates within cell wall biogenesis; peptidoglycan biosynthesis. Its function is as follows. Cell wall formation. The polypeptide is D-alanine--D-alanine ligase (Staphylococcus saprophyticus subsp. saprophyticus (strain ATCC 15305 / DSM 20229 / NCIMB 8711 / NCTC 7292 / S-41)).